The sequence spans 213 residues: FMN-dependent NADH:quinone oxidoreductase (213 aa).

Residue S10 participates in FMN binding.

The protein belongs to the azoreductase type 1 family. As to quaternary structure, homodimer. FMN is required as a cofactor.

The catalysed reaction is 2 a quinone + NADH + H(+) = 2 a 1,4-benzosemiquinone + NAD(+). It carries out the reaction N,N-dimethyl-1,4-phenylenediamine + anthranilate + 2 NAD(+) = 2-(4-dimethylaminophenyl)diazenylbenzoate + 2 NADH + 2 H(+). Its function is as follows. Quinone reductase that provides resistance to thiol-specific stress caused by electrophilic quinones. Functionally, also exhibits azoreductase activity. Catalyzes the reductive cleavage of the azo bond in aromatic azo compounds to the corresponding amines. This Opitutus terrae (strain DSM 11246 / JCM 15787 / PB90-1) protein is FMN-dependent NADH:quinone oxidoreductase.